We begin with the raw amino-acid sequence, 628 residues long: DNA-directed RNA polymerase III subunit RPC3 (628 aa).

A compositionally biased stretch (acidic residues) spans 360 to 383; it reads EVDGEASADEDEGEDESSEESDYD. The segment at 360 to 422 is disordered; that stretch reads EVDGEASADE…SAAPKERRMD (63 aa). A compositionally biased stretch (low complexity) spans 390–406; sequence TTHGTNGVNGTNGTNGT. Basic and acidic residues predominate over residues 408–422; the sequence is VKFDESAAPKERRMD. Residues 555 to 576 are leucine-zipper; the sequence is GYVTMVHCLQVLEALRRKERDV.

It belongs to the RNA polymerase beta chain family. As to quaternary structure, component of the RNA polymerase III (Pol III) complex consisting of 17 subunits.

It localises to the nucleus. Functionally, DNA-dependent RNA polymerase catalyzes the transcription of DNA into RNA using the four ribonucleoside triphosphates as substrates. Specific core component of RNA polymerase III which synthesizes small RNAs, such as 5S rRNA and tRNAs. In Chaetomium globosum (strain ATCC 6205 / CBS 148.51 / DSM 1962 / NBRC 6347 / NRRL 1970) (Soil fungus), this protein is DNA-directed RNA polymerase III subunit RPC3 (RPC82).